A 443-amino-acid polypeptide reads, in one-letter code: ATP-dependent protease ATPase subunit HslU (443 aa).

ATP-binding positions include Ile18, 60-65, Asp256, Glu321, and Arg393; that span reads GVGKTE.

The protein belongs to the ClpX chaperone family. HslU subfamily. In terms of assembly, a double ring-shaped homohexamer of HslV is capped on each side by a ring-shaped HslU homohexamer. The assembly of the HslU/HslV complex is dependent on binding of ATP.

It localises to the cytoplasm. Its function is as follows. ATPase subunit of a proteasome-like degradation complex; this subunit has chaperone activity. The binding of ATP and its subsequent hydrolysis by HslU are essential for unfolding of protein substrates subsequently hydrolyzed by HslV. HslU recognizes the N-terminal part of its protein substrates and unfolds these before they are guided to HslV for hydrolysis. This chain is ATP-dependent protease ATPase subunit HslU, found in Pasteurella multocida (strain Pm70).